The primary structure comprises 369 residues: Peptide chain release factor 1 (369 aa).

An N5-methylglutamine modification is found at glutamine 234.

It belongs to the prokaryotic/mitochondrial release factor family. In terms of processing, methylated by PrmC. Methylation increases the termination efficiency of RF1.

It is found in the cytoplasm. In terms of biological role, peptide chain release factor 1 directs the termination of translation in response to the peptide chain termination codons UAG and UAA. The chain is Peptide chain release factor 1 from Kocuria rhizophila (strain ATCC 9341 / DSM 348 / NBRC 103217 / DC2201).